Consider the following 88-residue polypeptide: Homeobox protein knotted-1-like 3 (88 aa).

One can recognise an ELK domain in the interval 4–24; it reads ELKKQLLRKYSGCLGNLRKEL. Positions 25-88 form a DNA-binding region, homeobox; TALE-type; that stretch reads CKKRKKDKLP…NQRKRHWKPS (64 aa).

This sequence belongs to the TALE/KNOX homeobox family. Strongly expressed in ear inflorescence primordia and shoot meristem. Weakly expressed in embryos. Absent from leaves.

It is found in the nucleus. Functionally, probably binds to the DNA sequence 5'-TGAC-3'. This is Homeobox protein knotted-1-like 3 (KNOX3) from Zea mays (Maize).